Reading from the N-terminus, the 60-residue chain is Cecropin-B (60 aa).

Residues 1–25 (MNFTKLFILVAIAVLVVVGVQPVDG) form the signal peptide. Leucine amide is present on Leu-59.

This sequence belongs to the cecropin family.

Its subcellular location is the secreted. Its function is as follows. Cecropins have lytic and antibacterial activity against several Gram-positive and Gram-negative bacteria. This is Cecropin-B (CecB) from Anopheles gambiae (African malaria mosquito).